Reading from the N-terminus, the 154-residue chain is Ribonuclease HI (154 aa).

Residues 1–142 (MTKHVEIFTD…CDELARTAAE (142 aa)) form the RNase H type-1 domain. Positions 10, 48, 70, and 134 each coordinate Mg(2+).

It belongs to the RNase H family. In terms of assembly, monomer. Requires Mg(2+) as cofactor.

Its subcellular location is the cytoplasm. It carries out the reaction Endonucleolytic cleavage to 5'-phosphomonoester.. Its function is as follows. Endonuclease that specifically degrades the RNA of RNA-DNA hybrids. The protein is Ribonuclease HI of Vibrio parahaemolyticus serotype O3:K6 (strain RIMD 2210633).